The sequence spans 267 residues: Probable tetrahydroxynaphthalene reductase MYCGRDRAFT_87994 (267 aa).

NADP(+)-binding residues include isoleucine 26, aspartate 72, asparagine 99, and arginine 132. The active-site Proton donor is the serine 149. 4 residues coordinate NADP(+): tyrosine 163, lysine 167, isoleucine 196, and threonine 198. The active-site Proton acceptor is the tyrosine 163. The active-site Lowers pKa of active site Tyr is lysine 167.

Belongs to the short-chain dehydrogenases/reductases (SDR) family. As to quaternary structure, homotetramer.

It carries out the reaction scytalone + NADP(+) = naphthalene-1,3,6,8-tetrol + NADPH + H(+). It participates in pigment biosynthesis; melanin biosynthesis. Functionally, probable tetrahydroxynaphthalene reductase; part of the gene cluster 29 that mediates the biosynthesis dihydroxynaphthalene (DHN)-melanin, a bluish-green pigment and a structural component of the conidial wall. Catalyzes the NADPH-dependent reduction of 1,3,6,8-tetrahydroxynaphthalene (T4HN) into (+)-scytalone. The polypeptide is Probable tetrahydroxynaphthalene reductase MYCGRDRAFT_87994 (Zymoseptoria tritici (strain CBS 115943 / IPO323) (Speckled leaf blotch fungus)).